An 80-amino-acid chain; its full sequence is Large ribosomal subunit protein bL31 (80 aa).

Residues C16, C18, C36, and C39 each contribute to the Zn(2+) site.

The protein belongs to the bacterial ribosomal protein bL31 family. Type A subfamily. Part of the 50S ribosomal subunit. The cofactor is Zn(2+).

Its function is as follows. Binds the 23S rRNA. In Methylacidiphilum infernorum (isolate V4) (Methylokorus infernorum (strain V4)), this protein is Large ribosomal subunit protein bL31.